A 450-amino-acid chain; its full sequence is Casein kinase 1-like protein 1 (450 aa).

Positions 9–278 (FRLGRKIGSG…LKRIFRDLFI (270 aa)) constitute a Protein kinase domain. ATP-binding positions include 15–23 (IGSGSFGEI) and Lys38. Catalysis depends on Asp128, which acts as the Proton acceptor. The segment at 311 to 450 (AVGTSAALPP…LQVSDEHHPH (140 aa)) is disordered. Residues 328–342 (YTGEEEGRPHMESSR) are compositionally biased toward basic and acidic residues. The span at 349-365 (LDNSGNISNQPTSSSAR) shows a compositional bias: polar residues. The span at 371-382 (SSSLFAQSAGSS) shows a compositional bias: low complexity.

The protein belongs to the protein kinase superfamily. CK1 Ser/Thr protein kinase family. Casein kinase I subfamily. As to quaternary structure, monomer. Post-translationally, autophosphorylated. Expressed in flowers.

It localises to the cytoplasm. The protein resides in the cell junction. It is found in the plasmodesma. The catalysed reaction is L-seryl-[protein] + ATP = O-phospho-L-seryl-[protein] + ADP + H(+). It catalyses the reaction L-threonyl-[protein] + ATP = O-phospho-L-threonyl-[protein] + ADP + H(+). Functionally, casein kinases are operationally defined by their preferential utilization of acidic proteins such as caseins as substrates. It can phosphorylate a large number of proteins. The polypeptide is Casein kinase 1-like protein 1 (Arabidopsis thaliana (Mouse-ear cress)).